The chain runs to 229 residues: Aquaporin Z (229 aa).

2 helical membrane-spanning segments follow: residues 8-28 and 33-53; these read FFGTFWLVLGGCGSAVLAAGV and IGYLGVALAFGLSVLTMAYAI. Residues 62–64 carry the NPA 1 motif; it reads NPA. A run of 3 helical transmembrane segments spans residues 81–101, 131–151, and 158–178; these read LPYVVAQVLGGLAAGGVLYLI, AALVSEVVLTGMFLLIILGAT, and GFAPIAIGLTLTLIHLISIPV. The NPA 2 signature appears at 184–186; it reads NPA. The helical transmembrane segment at 199–219 threads the bilayer; the sequence is AVSQLWLFWVAPILGAVLGAL.

The protein belongs to the MIP/aquaporin (TC 1.A.8) family. In terms of assembly, homotetramer.

It localises to the cell inner membrane. It catalyses the reaction H2O(in) = H2O(out). Channel that permits osmotically driven movement of water in both directions. It is involved in the osmoregulation and in the maintenance of cell turgor during volume expansion in rapidly growing cells. It mediates rapid entry or exit of water in response to abrupt changes in osmolarity. In Pseudomonas aeruginosa (strain ATCC 15692 / DSM 22644 / CIP 104116 / JCM 14847 / LMG 12228 / 1C / PRS 101 / PAO1), this protein is Aquaporin Z.